The sequence spans 295 residues: 4-hydroxy-tetrahydrodipicolinate synthase (295 aa).

Thr-47 serves as a coordination point for pyruvate. Tyr-135 serves as the catalytic Proton donor/acceptor. Lys-163 (schiff-base intermediate with substrate) is an active-site residue. Ile-206 contacts pyruvate.

This sequence belongs to the DapA family. As to quaternary structure, homodimer.

It is found in the cytoplasm. The enzyme catalyses L-aspartate 4-semialdehyde + pyruvate = (2S,4S)-4-hydroxy-2,3,4,5-tetrahydrodipicolinate + H2O + H(+). The protein operates within amino-acid biosynthesis; L-lysine biosynthesis via DAP pathway; (S)-tetrahydrodipicolinate from L-aspartate: step 3/4. Its function is as follows. Catalyzes the condensation of (S)-aspartate-beta-semialdehyde [(S)-ASA] and pyruvate to 4-hydroxy-tetrahydrodipicolinate (HTPA). In Staphylococcus aureus (strain bovine RF122 / ET3-1), this protein is 4-hydroxy-tetrahydrodipicolinate synthase.